Here is a 519-residue protein sequence, read N- to C-terminus: ATP synthase subunit alpha 2 (519 aa).

An ATP-binding site is contributed by 179–186 (GDRQTGKT).

Belongs to the ATPase alpha/beta chains family. In terms of assembly, F-type ATPases have 2 components, CF(1) - the catalytic core - and CF(0) - the membrane proton channel. CF(1) has five subunits: alpha(3), beta(3), gamma(1), delta(1), epsilon(1). CF(0) has three main subunits: a(1), b(2) and c(9-12). The alpha and beta chains form an alternating ring which encloses part of the gamma chain. CF(1) is attached to CF(0) by a central stalk formed by the gamma and epsilon chains, while a peripheral stalk is formed by the delta and b chains.

Its subcellular location is the cell inner membrane. It carries out the reaction ATP + H2O + 4 H(+)(in) = ADP + phosphate + 5 H(+)(out). Functionally, produces ATP from ADP in the presence of a proton gradient across the membrane. The alpha chain is a regulatory subunit. In Syntrophus aciditrophicus (strain SB), this protein is ATP synthase subunit alpha 2.